We begin with the raw amino-acid sequence, 228 residues long: Protein ULTRAPETALA 2 (228 aa).

The SAND domain occupies 14–121; that stretch reads EELQEISGVH…NKALKNSNVS (108 aa).

As to expression, expressed in influorescence, pollen and siliques, with a higher expression in influorescence.

Its subcellular location is the cytoplasm. The protein localises to the nucleus. Its function is as follows. Putative transcription factor that acts as a key negative regulator of cell accumulation in shoot and floral meristems. Negatively regulates the size of the WUSCHEL (WUS)-expressing organizing center in inflorescence meristems. May act by down-regulating expression of WUS. Can compensate for mutant ULT1 protein when overexpressed. This Arabidopsis thaliana (Mouse-ear cress) protein is Protein ULTRAPETALA 2 (ULT2).